Consider the following 345-residue polypeptide: Probable 1-aminocyclopropane-1-carboxylate deaminase (345 aa).

Lys58 bears the N6-(pyridoxal phosphate)lysine mark. Ser85 serves as the catalytic Nucleophile.

Belongs to the ACC deaminase/D-cysteine desulfhydrase family. Requires pyridoxal 5'-phosphate as cofactor.

The catalysed reaction is 1-aminocyclopropane-1-carboxylate + H2O = 2-oxobutanoate + NH4(+). Functionally, catalyzes a cyclopropane ring-opening reaction, the irreversible conversion of 1-aminocyclopropane-1-carboxylate (ACC) to ammonia and alpha-ketobutyrate. The protein is Probable 1-aminocyclopropane-1-carboxylate deaminase of Cryptococcus neoformans var. neoformans serotype D (strain JEC21 / ATCC MYA-565) (Filobasidiella neoformans).